Reading from the N-terminus, the 387-residue chain is F-box only protein 4 (387 aa).

Residues serine 11, serine 12, and serine 48 each carry the phosphoserine modification. Residues alanine 56–phenylalanine 102 enclose the F-box domain.

As to quaternary structure, homodimer. Part of the SCF (SKP1-CUL1-F-box) E3 ubiquitin-protein ligase complex SCF(FBXO4) formed of CUL1, SKP1, RBX1 and FBXO4. Interacts with TERF1; this interaction is prevented in the presence of GNL3L. Identified in a complex with CRYAB and CCND1. Post-translationally, phosphorylation at Ser-11 varies during the cell cycle. It is low in resting cells and high in the S phase and the G2/M phase of the cell cycle. Phosphorylation is decreased during late G1 phase. Phosphorylation at Ser-11 promotes homodimerization and is necessary for optimal ubiquitin ligase activity towards CCND1.

Its subcellular location is the cytoplasm. It participates in protein modification; protein ubiquitination. Substrate recognition component of a SCF (SKP1-CUL1-F-box protein) E3 ubiquitin-protein ligase complex that mediates the ubiquitination and subsequent proteasomal degradation of target proteins. Promotes ubiquitination of cyclin-D1 (CCND1) and its subsequent proteasomal degradation. However, it does not act as a major regulator of CCND1 stability during the G1/S transition. Recognizes TERF1 and promotes its ubiquitination together with UBE2D1. Promotes ubiquitination of FXR1 following phosphorylation of FXR1 by GSK3B, leading to FXR1 degradation by the proteasome. The protein is F-box only protein 4 (FBXO4) of Bos taurus (Bovine).